We begin with the raw amino-acid sequence, 740 residues long: Ribosome-releasing factor 2, mitochondrial (740 aa).

The N-terminal 29 residues, 1-29 (MLKYAWQSGPKQSNRWLWHLSNQIWKRSY), are a transit peptide targeting the mitochondrion. The 280-residue stretch at 31 to 310 (SKIRNIGILA…AVNAYLPAPE (280 aa)) folds into the tr-type G domain. Residues 40–47 (AHIDAGKT), 104–108 (DTPGH), and 158–161 (NKMD) each bind GTP.

Belongs to the TRAFAC class translation factor GTPase superfamily. Classic translation factor GTPase family. EF-G/EF-2 subfamily.

The protein localises to the mitochondrion. Mitochondrial GTPase that mediates the disassembly of ribosomes from messenger RNA at the termination of mitochondrial protein biosynthesis. Not involved in the GTP-dependent ribosomal translocation step during translation elongation. The protein is Ribosome-releasing factor 2, mitochondrial of Drosophila melanogaster (Fruit fly).